A 173-amino-acid polypeptide reads, in one-letter code: Mesencephalic astrocyte-derived neurotrophic factor homolog (173 aa).

The N-terminal stretch at 1–22 (MKTWHMVVVIGFLATLAQTSLA) is a signal peptide. Cystine bridges form between Cys28–Cys114, Cys31–Cys103, Cys61–Cys72, and Cys148–Cys151.

Belongs to the ARMET family.

It localises to the secreted. Required during the maturation of the embryonic nervous system for maintenance of neuronal and cuticular connectivity. Essential for maintenance of dopaminergic neurons and dopamine levels. The protein is Mesencephalic astrocyte-derived neurotrophic factor homolog of Drosophila simulans (Fruit fly).